We begin with the raw amino-acid sequence, 107 residues long: MRNSHNITLTNNDSLTEDEETTWSLPGAVVGFISWLFALAMPMLIYGSNTLFFFIYTWPFFLALMPVAVVVGIALHSLMDGKLRYSIVFTLVTVGIMFGALFMWLLG.

Over 1–20 (MRNSHNITLTNNDSLTEDEE) the chain is Cytoplasmic. Residues 21–43 (TTWSLPGAVVGFISWLFALAMPM) form a helical membrane-spanning segment. Residues 44 to 52 (LIYGSNTLF) lie on the Periplasmic side of the membrane. Residues 53 to 75 (FFIYTWPFFLALMPVAVVVGIAL) form a helical membrane-spanning segment. Topologically, residues 76–86 (HSLMDGKLRYS) are cytoplasmic. The helical transmembrane segment at 87-106 (IVFTLVTVGIMFGALFMWLL) threads the bilayer. Glycine 107 is a topological domain (periplasmic).

It localises to the cell inner membrane. The polypeptide is Inner membrane protein YgbE (ygbE) (Escherichia coli (strain K12)).